We begin with the raw amino-acid sequence, 506 residues long: Cobyric acid synthase (506 aa).

One can recognise a GATase cobBQ-type domain in the interval 251–448 (DITIAIVQLP…LHGLFDSDAF (198 aa)). The active-site Nucleophile is cysteine 332. Histidine 440 is an active-site residue.

The protein belongs to the CobB/CobQ family. CobQ subfamily.

It functions in the pathway cofactor biosynthesis; adenosylcobalamin biosynthesis. Functionally, catalyzes amidations at positions B, D, E, and G on adenosylcobyrinic A,C-diamide. NH(2) groups are provided by glutamine, and one molecule of ATP is hydrogenolyzed for each amidation. This chain is Cobyric acid synthase, found in Salmonella heidelberg (strain SL476).